The primary structure comprises 430 residues: Aspartate aminotransferase, mitochondrial (430 aa).

The N-terminal 29 residues, 1–29, are a transit peptide targeting the mitochondrion; it reads MALLHSGRALPGIAAAFHPGLAAAASARA. T48 bears the Phosphothreonine mark. K59 is modified (N6-acetyllysine). G65 serves as a coordination point for substrate. At K73 the chain carries N6-acetyllysine; alternate. Residue K73 is modified to N6-succinyllysine; alternate. An N6-acetyllysine modification is found at K82. At K90 the chain carries N6-acetyllysine; alternate. N6-succinyllysine; alternate is present on K90. A 3'-nitrotyrosine; alternate modification is found at Y96. Phosphotyrosine; alternate is present on Y96. K107 and K122 each carry N6-acetyllysine; alternate. N6-succinyllysine; alternate occurs at positions 107 and 122. S143 carries the phosphoserine modification. At K159 the chain carries N6-acetyllysine; alternate. Residue K159 is modified to N6-succinyllysine; alternate. W162 is a substrate binding site. K185 carries the N6-acetyllysine; alternate modification. At K185 the chain carries N6-succinyllysine; alternate. Position 215 (N215) interacts with substrate. K227 carries the post-translational modification N6-succinyllysine. K234 is modified (N6-acetyllysine). N6-acetyllysine; alternate occurs at positions 279 and 296. At K279 the chain carries N6-(pyridoxal phosphate)lysine; alternate. At K296 the chain carries N6-succinyllysine; alternate. K302 carries the N6-acetyllysine modification. An N6-acetyllysine; alternate modification is found at K309. Residue K309 is modified to N6-succinyllysine; alternate. R313 is subject to Asymmetric dimethylarginine. A Phosphothreonine modification is found at T333. K338 carries the post-translational modification N6-acetyllysine; alternate. K338 is modified (N6-succinyllysine; alternate). Position 345 is an N6-acetyllysine (K345). K363 carries the N6-acetyllysine; alternate modification. N6-succinyllysine; alternate is present on K363. N6-acetyllysine occurs at positions 364 and 387. Residues K396 and K404 each carry the N6-acetyllysine; alternate modification. Residues K396 and K404 each carry the N6-succinyllysine; alternate modification. Position 407 (R407) interacts with substrate.

It belongs to the class-I pyridoxal-phosphate-dependent aminotransferase family. As to quaternary structure, homodimer. The cofactor is pyridoxal 5'-phosphate.

The protein localises to the mitochondrion matrix. The protein resides in the cell membrane. The catalysed reaction is L-aspartate + 2-oxoglutarate = oxaloacetate + L-glutamate. It catalyses the reaction L-kynurenine + 2-oxoglutarate = kynurenate + L-glutamate + H2O. Its function is as follows. Catalyzes the irreversible transamination of the L-tryptophan metabolite L-kynurenine to form kynurenic acid (KA). As a member of the malate-aspartate shuttle, it has a key role in the intracellular NAD(H) redox balance. Is important for metabolite exchange between mitochondria and cytosol, and for amino acid metabolism. Facilitates cellular uptake of long-chain free fatty acids. The polypeptide is Aspartate aminotransferase, mitochondrial (GOT2) (Pongo abelii (Sumatran orangutan)).